Consider the following 845-residue polypeptide: Disintegrin and metalloproteinase domain-containing protein 9 (845 aa).

An N-terminal signal peptide occupies residues Met1–Ala29. Residues Gly30–Asp697 lie on the Extracellular side of the membrane. Asn144, Asn154, and Asn231 each carry an N-linked (GlcNAc...) asparagine glycan. The 195-residue stretch at Arg212–Pro406 folds into the Peptidase M12B domain. Cystine bridges form between Cys322-Cys401, Cys363-Cys385, Cys365-Cys370, and Cys473-Cys493. His347 is a binding site for Zn(2+). Glu348 is a catalytic residue. Positions 351 and 357 each coordinate Zn(2+). 3 N-linked (GlcNAc...) asparagine glycosylation sites follow: Asn381, Asn487, and Asn636. The region spanning Ala414–Asn501 is the Disintegrin domain. Disulfide bonds link Cys644–Cys656, Cys650–Cys662, and Cys664–Cys673. The 55-residue stretch at Cys644 to Gly698 folds into the EGF-like domain. Residues Gly698–Ile718 traverse the membrane as a helical segment. Residues Lys719–Thr845 lie on the Cytoplasmic side of the membrane. The segment at Lys729–Thr845 is disordered. Polar residues predominate over residues Met734–Arg745. Pro residues predominate over residues Pro783–Gly794.

Interacts with SH3GL2 and SNX9 through its cytoplasmic tail. Interacts with ITGA6. Zn(2+) serves as cofactor. Proteolytically cleaved in the trans-Golgi network before it reaches the plasma membrane to generate a mature protein. The removal of the pro-domain occurs via cleavage at two different sites. Processed most likely by a pro-protein convertase such as furin, at the boundary between the pro-domain and the catalytic domain. An additional upstream cleavage pro-protein convertase site (Arg-56/Glu-57) has an important role in the activation of ADAM9. In terms of processing, phosphorylation is induced in vitro by phorbol-12-myristate-13-acetate (PMA).

It localises to the cell membrane. Its activity is regulated as follows. Synthesized as an inactive form which is proteolytically cleaved to generate an active enzyme. Processing at the upstream site is particularly important for activation of the proenzyme, whereas processing at the boundary between the pro-domain and the catalytic domain does not appear to be essential. Inhibited by hydroxamic acid-based inhibitors. Functionally, metalloprotease that cleaves and releases a number of molecules with important roles in tumorigenesis and angiogenesis, such as TEK, KDR, EPHB4, CD40, VCAM1 and CDH5. May mediate cell-cell, cell-matrix interactions and regulate the motility of cells via interactions with integrins. The chain is Disintegrin and metalloproteinase domain-containing protein 9 from Mus musculus (Mouse).